The primary structure comprises 191 residues: Probable DNA-directed RNA polymerase subunit delta (191 aa).

The region spanning 14–83 (LSMIEVARAI…GDNKWGLRSW (70 aa)) is the HTH HARE-type domain. Acidic residues-rich tracts occupy residues 119-133 (EDAI…EDEN) and 143-191 (YDND…ETND). The tract at residues 119–191 (EDAIDYNDDD…DDDYEDETND (73 aa)) is disordered.

The protein belongs to the RpoE family. As to quaternary structure, RNAP is composed of a core of 2 alpha, a beta and a beta' subunits. The core is associated with a delta subunit and one of several sigma factors.

Functionally, participates in both the initiation and recycling phases of transcription. In the presence of the delta subunit, RNAP displays an increased specificity of transcription, a decreased affinity for nucleic acids, and an increased efficiency of RNA synthesis because of enhanced recycling. This chain is Probable DNA-directed RNA polymerase subunit delta, found in Streptococcus thermophilus (strain ATCC BAA-491 / LMD-9).